A 627-amino-acid chain; its full sequence is Phosphomethylpyrimidine synthase (627 aa).

Residues M1–P24 show a composition bias toward polar residues. Residues M1–V29 are disordered. Substrate contacts are provided by residues N231, M260, Y289, H325, S345–G347, D386–R389, and E425. H429 serves as a coordination point for Zn(2+). Y452 contacts substrate. A Zn(2+)-binding site is contributed by H493. The [4Fe-4S] cluster site is built by C573, C576, and C581.

The protein belongs to the ThiC family. As to quaternary structure, homodimer. [4Fe-4S] cluster is required as a cofactor.

The catalysed reaction is 5-amino-1-(5-phospho-beta-D-ribosyl)imidazole + S-adenosyl-L-methionine = 4-amino-2-methyl-5-(phosphooxymethyl)pyrimidine + CO + 5'-deoxyadenosine + formate + L-methionine + 3 H(+). The protein operates within cofactor biosynthesis; thiamine diphosphate biosynthesis. Functionally, catalyzes the synthesis of the hydroxymethylpyrimidine phosphate (HMP-P) moiety of thiamine from aminoimidazole ribotide (AIR) in a radical S-adenosyl-L-methionine (SAM)-dependent reaction. The chain is Phosphomethylpyrimidine synthase from Pseudomonas aeruginosa (strain UCBPP-PA14).